A 142-amino-acid polypeptide reads, in one-letter code: Large ribosomal subunit protein uL13 (142 aa).

The protein belongs to the universal ribosomal protein uL13 family. Part of the 50S ribosomal subunit.

This protein is one of the early assembly proteins of the 50S ribosomal subunit, although it is not seen to bind rRNA by itself. It is important during the early stages of 50S assembly. The polypeptide is Large ribosomal subunit protein uL13 (Polynucleobacter asymbioticus (strain DSM 18221 / CIP 109841 / QLW-P1DMWA-1) (Polynucleobacter necessarius subsp. asymbioticus)).